The chain runs to 86 residues: Anti-adapter protein IraP (86 aa).

Positions 1-38 form a coiled coil; that stretch reads MKNLIAELLVKLAQKEEEAKELTVQVEALEIVVTALLR.

It belongs to the IraP family. In terms of assembly, interacts with RssB.

Its subcellular location is the cytoplasm. In terms of biological role, inhibits RpoS proteolysis by regulating RssB activity, thereby increasing the stability of the sigma stress factor RpoS especially during phosphate starvation, but also in stationary phase and during nitrogen starvation. Its effect on RpoS stability is due to its interaction with RssB, which probably blocks the interaction of RssB with RpoS, and the consequent delivery of the RssB-RpoS complex to the ClpXP protein degradation pathway. The polypeptide is Anti-adapter protein IraP (Klebsiella pneumoniae subsp. pneumoniae (strain ATCC 700721 / MGH 78578)).